Here is a 317-residue protein sequence, read N- to C-terminus: L-lactate dehydrogenase (317 aa).

Residues V17, D38, K43, Y69, and 83–84 contribute to the NAD(+) site; that span reads GA. The substrate site is built by Q86 and R92. Residues S105, 122–124, and S147 contribute to the NAD(+) site; that span reads ATN. 124 to 127 provides a ligand contact to substrate; it reads NPVD. Position 152-155 (152-155) interacts with substrate; that stretch reads DTAR. Positions 157 and 172 each coordinate beta-D-fructose 1,6-bisphosphate. H179 (proton acceptor) is an active-site residue. The residue at position 224 (Y224) is a Phosphotyrosine. T233 provides a ligand contact to substrate.

It belongs to the LDH/MDH superfamily. LDH family. As to quaternary structure, homotetramer.

It is found in the cytoplasm. It catalyses the reaction (S)-lactate + NAD(+) = pyruvate + NADH + H(+). Its pathway is fermentation; pyruvate fermentation to lactate; (S)-lactate from pyruvate: step 1/1. Allosterically activated by fructose 1,6-bisphosphate (FBP). In terms of biological role, catalyzes the conversion of lactate to pyruvate. This Geobacillus kaustophilus (strain HTA426) protein is L-lactate dehydrogenase.